The chain runs to 434 residues: 3-phosphoshikimate 1-carboxyvinyltransferase (434 aa).

3-phosphoshikimate-binding residues include lysine 22, serine 23, and arginine 27. A phosphoenolpyruvate-binding site is contributed by lysine 22. Phosphoenolpyruvate is bound by residues glycine 94 and arginine 122. 3-phosphoshikimate is bound by residues serine 169, serine 170, glutamine 171, serine 199, aspartate 320, and lysine 347. Glutamine 171 lines the phosphoenolpyruvate pocket. Aspartate 320 serves as the catalytic Proton acceptor. Phosphoenolpyruvate is bound by residues arginine 351, arginine 395, and lysine 420.

This sequence belongs to the EPSP synthase family. Monomer.

It is found in the cytoplasm. The enzyme catalyses 3-phosphoshikimate + phosphoenolpyruvate = 5-O-(1-carboxyvinyl)-3-phosphoshikimate + phosphate. Its pathway is metabolic intermediate biosynthesis; chorismate biosynthesis; chorismate from D-erythrose 4-phosphate and phosphoenolpyruvate: step 6/7. Catalyzes the transfer of the enolpyruvyl moiety of phosphoenolpyruvate (PEP) to the 5-hydroxyl of shikimate-3-phosphate (S3P) to produce enolpyruvyl shikimate-3-phosphate and inorganic phosphate. In Ralstonia pickettii (strain 12J), this protein is 3-phosphoshikimate 1-carboxyvinyltransferase.